Consider the following 278-residue polypeptide: Trehalose/maltose transport system permease protein MalG (278 aa).

6 helical membrane-spanning segments follow: residues 12–32 (IIGAILMAIICLFPFIWMIVV), 74–94 (IIIASLVTLTTVSISSLAAYA), 106–126 (IPIFVLGLSMFPQISLVGYLF), 141–161 (LYFPYVAWTLPLSLWILLSYF), 186–206 (IILPLSAPALFSTALLVFIAA), and 242–262 (GSVMAASVISTIPLVIMALLF). The 193-residue stretch at 70-262 (LKNSIIIASL…IPLVIMALLF (193 aa)) folds into the ABC transmembrane type-1 domain.

It belongs to the binding-protein-dependent transport system permease family. The complex is composed of two ATP-binding proteins (MalK), two transmembrane proteins (MalG and MalF) and a solute-binding protein (MalE).

It localises to the cell membrane. In terms of biological role, part of the ABC transporter complex MalEFGK involved in trehalose/maltose import. Responsible for the translocation of the substrate across the membrane. The protein is Trehalose/maltose transport system permease protein MalG (malG) of Thermococcus litoralis (strain ATCC 51850 / DSM 5473 / JCM 8560 / NS-C).